Reading from the N-terminus, the 170-residue chain is Myelin-associated oligodendrocyte basic protein (170 aa).

The tract at residues 69-170 is disordered; it reads SRRATSPQRP…GSPTRAPRFW (102 aa). Over residues 82-92 the composition is skewed to low complexity; sequence PAASPVVVRAP. S85, S98, and S107 each carry phosphoserine. 2 repeat units span residues 93–101 and 105–110. A 3 X 9 AA approximate tandem repeats region spans residues 93 to 115; the sequence is PAKPKSPLMPAKPRSPPRPAKPR. A 3; half-length repeat occupies 111–115; the sequence is PAKPR. A compositionally biased stretch (basic and acidic residues) spans 118-130; it reads SRTERQPRPRPEV. Residues 138-151 are compositionally biased toward low complexity; it reads KPPQKSKQPARSSP.

It localises to the cytoplasm. It is found in the perinuclear region. May play a role in compacting or stabilizing the myelin sheath possibly by binding the negatively charged acidic phospholipids of the cytoplasmic membrane. The chain is Myelin-associated oligodendrocyte basic protein (Mobp) from Mus musculus (Mouse).